The sequence spans 1297 residues: Phosphoribosylformylglycinamidine synthase (1297 aa).

Positions 303–329 are disordered; sequence ISPFPGAATGSGGEIRDEGATGRGAKP. 308–319 contributes to the ATP binding site; the sequence is GAATGSGGEIRD. Residues D680, E719, N723, and D887 each coordinate Mg(2+). S889 is a binding site for ATP. One can recognise a Glutamine amidotransferase type-1 domain in the interval 1045-1297; it reads IAILREQGVN…RLFRNARMVF (253 aa). C1138 serves as the catalytic Nucleophile. Residues H1263 and E1265 contribute to the active site.

In the N-terminal section; belongs to the FGAMS family. Monomer.

The protein resides in the cytoplasm. It catalyses the reaction N(2)-formyl-N(1)-(5-phospho-beta-D-ribosyl)glycinamide + L-glutamine + ATP + H2O = 2-formamido-N(1)-(5-O-phospho-beta-D-ribosyl)acetamidine + L-glutamate + ADP + phosphate + H(+). Its pathway is purine metabolism; IMP biosynthesis via de novo pathway; 5-amino-1-(5-phospho-D-ribosyl)imidazole from N(2)-formyl-N(1)-(5-phospho-D-ribosyl)glycinamide: step 1/2. Functionally, phosphoribosylformylglycinamidine synthase involved in the purines biosynthetic pathway. Catalyzes the ATP-dependent conversion of formylglycinamide ribonucleotide (FGAR) and glutamine to yield formylglycinamidine ribonucleotide (FGAM) and glutamate. The polypeptide is Phosphoribosylformylglycinamidine synthase (Haemophilus influenzae (strain 86-028NP)).